The primary structure comprises 61 residues: Small ribosomal subunit protein uS14 (61 aa).

C24, C27, C40, and C43 together coordinate Zn(2+).

This sequence belongs to the universal ribosomal protein uS14 family. Zinc-binding uS14 subfamily. As to quaternary structure, part of the 30S ribosomal subunit. Contacts proteins S3 and S10. Requires Zn(2+) as cofactor.

In terms of biological role, binds 16S rRNA, required for the assembly of 30S particles and may also be responsible for determining the conformation of the 16S rRNA at the A site. This is Small ribosomal subunit protein uS14 from Anaeromyxobacter sp. (strain Fw109-5).